The chain runs to 385 residues: Nuclear hormone receptor family member nhr-68 (385 aa).

A DNA-binding region (nuclear receptor) is located at residues K4–A79. 2 consecutive NR C4-type zinc fingers follow at residues C7–C27 and C43–C62. The interval R81 to T110 is disordered. The region spanning P145–D384 is the NR LBD domain. Positions F373 to D384 are AF-2.

This sequence belongs to the nuclear hormone receptor family.

It is found in the nucleus. Functionally, probable transcription factor that acts in a feed-forward loop with nhr-10 to activate genes, including itself, involved in the vitamin B12-independent breakdown of the short-chain fatty acid propionate. This pathway is triggered in response to a diet low in vitamin B12, when canonical vitamin B12-dependent propionate breakdown cannot function; the resulting accumulation of propionate is probably sensed by nhr-68 and/or nhr-10. The polypeptide is Nuclear hormone receptor family member nhr-68 (Caenorhabditis elegans).